Consider the following 449-residue polypeptide: Elongation factor 1-alpha C (449 aa).

Positions 5–234 (KQHVSIVVIG…DACDPPKRPV (230 aa)) constitute a tr-type G domain. The segment at 14-21 (GHVDSGKS) is G1. 14 to 21 (GHVDSGKS) lines the GTP pocket. K55 is subject to N6,N6-dimethyllysine. The G2 stretch occupies residues 70–74 (GITID). At K79 the chain carries N6,N6,N6-trimethyllysine. Positions 91-94 (DAPG) are G3. Residues 91–95 (DAPGH) and 153–156 (NKMD) each bind GTP. The interval 153–156 (NKMD) is G4. K187 bears the N6,N6,N6-trimethyllysine mark. Residues 194–196 (SGW) are G5. K265 bears the N6-methyllysine mark. 2 positions are modified to N6,N6,N6-trimethyllysine: K310 and K400.

Belongs to the TRAFAC class translation factor GTPase superfamily. Classic translation factor GTPase family. EF-Tu/EF-1A subfamily.

It localises to the cytoplasm. This protein promotes the GTP-dependent binding of aminoacyl-tRNA to the A-site of ribosomes during protein biosynthesis. The protein is Elongation factor 1-alpha C (TEF-C) of Porphyra purpurea (Red seaweed).